A 349-amino-acid polypeptide reads, in one-letter code: Peptide chain release factor 1 (349 aa).

N5-methylglutamine is present on Gln-233.

The protein belongs to the prokaryotic/mitochondrial release factor family. Methylated by PrmC. Methylation increases the termination efficiency of RF1.

Its subcellular location is the cytoplasm. Peptide chain release factor 1 directs the termination of translation in response to the peptide chain termination codons UAG and UAA. The polypeptide is Peptide chain release factor 1 (Pelotomaculum thermopropionicum (strain DSM 13744 / JCM 10971 / SI)).